The sequence spans 963 residues: MASVQWHSRSRKYDSEWQASRLEVSAVEFSDYHPLKAITVTDSKSRRGGRKGSTSSSSSSSSSVAPDPLSSMLDGTDPLSLFAAASETPTLPHSVSAGELGRKRKEKEEEVGLDFEPWSSKRGEILSRFTTTEKLSINLFMGSDTSKASSPSSAVSEKVRTRLEELDDLEEGSQRELLNLSQQDYVNRIEELNQSLKEAWGSDQKVKALKIVIQCSKLLSDTSVIQFYPSKFVLITDILDTFGGLVYDRIWSMCADPHPLPESFSADDVNDTAKETCLNWFFKIASIRELVPRLYVEAALLKCNRFLTKCGIQETLQRLTAMIRGIGDPLVAVYARAYLCRVGMEVAPHLKDSLNKNFFDLLASFRQIHGDSVQNQLVLQRVEIPVYLTLYSPAINWILQCVAYRAPEVLLTEMMDRCKKLGNNALLLNSVMWAFRAEFVATRATDFIGMIKDCDEAGFPKHLLFASLGRSLSCADPPESERLSILNEAWKVITKVRSPRDYINCAEIWVEFTCRHFTKREVNTVLADIIKHMTPDRAFEDAYPQLQSVIKKILTYFHDFSMLFSMEKFLPFLDMFQKDSVRVEVCKSIMEVFIKHQQEPTRDPVILNALLHICKTMHDSVNALTLDDEKRSLALLINGFIRMVSFGRDFEQQLSFCVEARATFCNLEPVIIHLIHTVNQLAMETGRVMKGNHSRKTAAFVRACAAYSFITIPSLTNIFSRLNLYLLSGQVALANQCLSQADAFLKAAVSILPEVPRSISIEGKQRSSESFLLDFINNFLSTLLVVPDHPEQGVLYLVRGLLNMVQDYTWEDNSDAKVRVYISALPLLAAMSQESYLYTIPKVDSNETLYGGDPKFIAEINKLCETLIGQVLDHLKSLGRDEEVRRQGSLAFSLFGCLLAHGDLRNNKLNQLAVNLWNLSHKHGICDTRTSVRTLEHIKHQAQQTDMSHFSDMTARLSLQSRA.

Disordered regions lie at residues 38-71 and 85-111; these read ITVT…PLSS and ASET…EEEV. Positions 52–63 are enriched in low complexity; the sequence is GSTSSSSSSSSS.

It belongs to the VPS35L family. In terms of assembly, component of the heterotrimeric retriever complex.

It localises to the endosome. Functionally, acts as a component of the retriever complex. The retriever complex is a heterotrimeric complex related to retromer cargo-selective complex (CSC) and essential for retromer-independent retrieval and recycling of numerous cargos such as integrins. The recruitment of the retriever complex to the endosomal membrane involves CCC and WASH complexes. In the endosomes, drives the retrieval and recycling of NxxY-motif-containing cargo proteins by coupling to SNX17, a cargo essential for the homeostatic maintenance of numerous cell surface proteins associated with processes that include cell migration, cell adhesion, nutrient supply and cell signaling. May be involved in copper-dependent atp7a trafficking between the trans-Golgi network and vesicles in the cell periphery. The protein is VPS35 endosomal protein-sorting factor-like (vps35l) of Danio rerio (Zebrafish).